The sequence spans 471 residues: Glutamate--tRNA ligase (471 aa).

Residues 9-19 (PSPTGYLHVGG) carry the 'HIGH' region motif. Cysteine 98, cysteine 100, cysteine 125, and histidine 127 together coordinate Zn(2+). Positions 237–241 (KLSKR) match the 'KMSKS' region motif. Residue lysine 240 participates in ATP binding.

This sequence belongs to the class-I aminoacyl-tRNA synthetase family. Glutamate--tRNA ligase type 1 subfamily. As to quaternary structure, monomer. Zn(2+) is required as a cofactor.

Its subcellular location is the cytoplasm. It carries out the reaction tRNA(Glu) + L-glutamate + ATP = L-glutamyl-tRNA(Glu) + AMP + diphosphate. In terms of biological role, catalyzes the attachment of glutamate to tRNA(Glu) in a two-step reaction: glutamate is first activated by ATP to form Glu-AMP and then transferred to the acceptor end of tRNA(Glu). The protein is Glutamate--tRNA ligase of Salmonella gallinarum (strain 287/91 / NCTC 13346).